Here is a 281-residue protein sequence, read N- to C-terminus: Phosphonates import ATP-binding protein PhnC (281 aa).

Residues 2-245 (FELKDVTRRF…AVKEIYGTDK (244 aa)) enclose the ABC transporter domain. Residue 34-41 (GRSGAGKS) participates in ATP binding.

The protein belongs to the ABC transporter superfamily. Phosphonates importer (TC 3.A.1.9.1) family. As to quaternary structure, the complex is composed of two ATP-binding proteins (PhnC), two transmembrane proteins (PhnE) and a solute-binding protein (PhnD).

It is found in the cell inner membrane. It carries out the reaction phosphonate(out) + ATP + H2O = phosphonate(in) + ADP + phosphate + H(+). Part of the ABC transporter complex PhnCDE involved in phosphonates import. Responsible for energy coupling to the transport system. The sequence is that of Phosphonates import ATP-binding protein PhnC from Rhizobium etli (strain ATCC 51251 / DSM 11541 / JCM 21823 / NBRC 15573 / CFN 42).